The primary structure comprises 338 residues: MLFERVVRPTLFRLKGGDAEAAHEFAVRRLAGLARMPAALAVLRARYGVSAPRTVFGLRFPNPVGLAAGMDKDGLALPAWPALGFGFVEVGTVTAHPQPGNPRPRLFRLPDSGAVVNRMGFNNAGAGALAARLAALPRPLGVPLGISLGKSRITPLEEAVEDYQTSYRALREYGDYFAVNVSSPNTPGLRELQDRAHLDALLAALVGEKPILVKIAPDLPEPAIAELLEVCLARGVAGVIATNTTLARDGLAPADQAGGAEAGGLSGRPLADRAREVVAFVHRETDGRLPIVGVGGIVTPDDAGRMFDAGASLVQLYTGFVYRGPALVRAAAAAARTP.

FMN-binding positions include 68 to 72 (AGMDK) and threonine 92. Lysine 72 provides a ligand contact to substrate. Position 117-121 (117-121 (NRMGF)) interacts with substrate. Residues serine 147 and asparagine 180 each contribute to the FMN site. Position 180 (asparagine 180) interacts with substrate. Serine 183 (nucleophile) is an active-site residue. Asparagine 185 is a substrate binding site. Residues lysine 214 and threonine 242 each coordinate FMN. 243 to 244 (NT) provides a ligand contact to substrate. FMN contacts are provided by residues glycine 267, glycine 296, and 317–318 (YT).

Belongs to the dihydroorotate dehydrogenase family. Type 2 subfamily. Monomer. The cofactor is FMN.

It localises to the cell membrane. It catalyses the reaction (S)-dihydroorotate + a quinone = orotate + a quinol. Its pathway is pyrimidine metabolism; UMP biosynthesis via de novo pathway; orotate from (S)-dihydroorotate (quinone route): step 1/1. Catalyzes the conversion of dihydroorotate to orotate with quinone as electron acceptor. This is Dihydroorotate dehydrogenase (quinone) from Salinispora arenicola (strain CNS-205).